Reading from the N-terminus, the 317-residue chain is tRNA N6-adenosine threonylcarbamoyltransferase (317 aa).

Fe cation contacts are provided by H110 and H114. Residues 132-136 (VVSGG), D165, G178, D182, and N271 contribute to the substrate site. D300 lines the Fe cation pocket.

It belongs to the KAE1 / TsaD family. The cofactor is Fe(2+).

The protein localises to the cytoplasm. The catalysed reaction is L-threonylcarbamoyladenylate + adenosine(37) in tRNA = N(6)-L-threonylcarbamoyladenosine(37) in tRNA + AMP + H(+). In terms of biological role, required for the formation of a threonylcarbamoyl group on adenosine at position 37 (t(6)A37) in tRNAs that read codons beginning with adenine. Is involved in the transfer of the threonylcarbamoyl moiety of threonylcarbamoyl-AMP (TC-AMP) to the N6 group of A37, together with TsaE and TsaB. TsaD likely plays a direct catalytic role in this reaction. The sequence is that of tRNA N6-adenosine threonylcarbamoyltransferase from Mesoplasma florum (strain ATCC 33453 / NBRC 100688 / NCTC 11704 / L1) (Acholeplasma florum).